A 188-amino-acid chain; its full sequence is MYNILKKSFYKQKSLDVASSLLGKMLLFNQHKGIITETEAYIGQDDQAAHSFHGYTKRTAVMFGNPGFSYVYLIYGMYHCLNVVTEPEGFPAAILIRSIILLSKNTPHTKVNGPGKICKTLHITKEHNNIDMTANHSFCICNTNLNIDDYICTPRIGISKATDKFWRFVIPDVTSLQYIDTKLVPTLT.

This sequence belongs to the DNA glycosylase MPG family.

This is Putative 3-methyladenine DNA glycosylase from Ehrlichia ruminantium (Cowdria ruminantium).